The sequence spans 628 residues: Probable alpha-L-arabinofuranosidase A (628 aa).

The signal sequence occupies residues Met1–Gly25. Residues Asn36, Asn51, Asn74, Asn152, Asn164, Asn260, Asn359, Asn404, and Asn493 are each glycosylated (N-linked (GlcNAc...) asparagine).

Belongs to the glycosyl hydrolase 51 family.

It localises to the secreted. The catalysed reaction is Hydrolysis of terminal non-reducing alpha-L-arabinofuranoside residues in alpha-L-arabinosides.. The protein operates within glycan metabolism; L-arabinan degradation. Its function is as follows. Alpha-L-arabinofuranosidase involved in the degradation of arabinoxylan, a major component of plant hemicellulose. Acts only on small linear 1,5-alpha-linked L-arabinofuranosyl oligosaccharides. This chain is Probable alpha-L-arabinofuranosidase A (abfA), found in Aspergillus terreus (strain NIH 2624 / FGSC A1156).